The following is a 1396-amino-acid chain: Major capsid protein (1396 aa).

This sequence belongs to the herpesviridae major capsid protein family. In terms of assembly, homomultimer. Makes the hexons and eleven out of twelve pentons. Interacts with triplex proteins 1/TRX1 and 2/TRX2; adjacent capsomers are linked together in groups of three by triplexes, heterotrimeric complexes composed of one molecule of TRX1 and two molecules of TRX2. Interacts with scaffold protein; this interaction allows efficient MCP transport to the host nucleus. Interacts with capsid vertex component 2/CVC2. Interacts with the small capsomere-interacting protein/SCP.

The protein localises to the virion. It localises to the host nucleus. Functionally, self-assembles to form an icosahedral capsid with a T=16 symmetry, about 200 nm in diameter, and consisting of 150 hexons and 12 pentons (total of 162 capsomers). Hexons form the edges and faces of the capsid and are each composed of six MCP molecules. In contrast, one penton is found at each of the 12 vertices. Eleven of the pentons are MCP pentamers, while the last vertex is occupied by the portal complex. The capsid is surrounded by a layer of proteinaceous material designated the tegument which, in turn, is enclosed in an envelope of host cell-derived lipids containing virus-encoded glycoproteins. In Varicella-zoster virus (strain Dumas) (HHV-3), this protein is Major capsid protein.